The following is a 470-amino-acid chain: Neuraminidase (470 aa).

At 1 to 14 (MNPNQKIITIGSAS) the chain is on the intravirion side. The segment at 11–32 (GSASLGILILNVILHVVSIIVT) is involved in apical transport and lipid raft association. Residues 15-35 (LGILILNVILHVVSIIVTVLV) form a helical membrane-spanning segment. Residues 32–86 (TVLVLNNNGTGLNCNGTIIREYNETVRVERVIQWYNTNTIEYIERPSNEYYMNNT) are hypervariable stalk region. At 36–470 (LNNNGTGLNC…AILPFDIDKM (435 aa)) the chain is on the virion surface side. Residues Asn39, Asn46, Asn54, and Asn84 are each glycosylated (N-linked (GlcNAc...) asparagine; by host). The interval 89-470 (LCEAQGFAPF…AILPFDIDKM (382 aa)) is head of neuraminidase. Cystine bridges form between Cys90-Cys417, Cys122-Cys127, Cys182-Cys229, Cys231-Cys236, Cys277-Cys290, Cys279-Cys288, Cys316-Cys335, and Cys421-Cys446. Arg116 lines the substrate pocket. N-linked (GlcNAc...) asparagine; by host glycosylation is present at Asn144. The active-site Proton donor/acceptor is the Asp149. Substrate is bound at residue Arg150. A substrate-binding site is contributed by 275-276 (EE). Residue Arg291 coordinates substrate. Residue Asp292 participates in Ca(2+) binding. Residue Asn293 is glycosylated (N-linked (GlcNAc...) asparagine; by host). Residues Gly296 and Asp322 each coordinate Ca(2+). Arg368 is a binding site for substrate. Asn398 carries an N-linked (GlcNAc...) asparagine; by host glycan. The active-site Nucleophile is Tyr402.

Belongs to the glycosyl hydrolase 34 family. In terms of assembly, homotetramer. Ca(2+) serves as cofactor. In terms of processing, N-glycosylated.

It localises to the virion membrane. The protein resides in the host apical cell membrane. It carries out the reaction Hydrolysis of alpha-(2-&gt;3)-, alpha-(2-&gt;6)-, alpha-(2-&gt;8)- glycosidic linkages of terminal sialic acid residues in oligosaccharides, glycoproteins, glycolipids, colominic acid and synthetic substrates.. With respect to regulation, inhibited by the neuraminidase inhibitors zanamivir (Relenza) and oseltamivir (Tamiflu). These drugs interfere with the release of progeny virus from infected cells and are effective against all influenza strains. Resistance to neuraminidase inhibitors is quite rare. In terms of biological role, catalyzes the removal of terminal sialic acid residues from viral and cellular glycoconjugates. Cleaves off the terminal sialic acids on the glycosylated HA during virus budding to facilitate virus release. Additionally helps virus spread through the circulation by further removing sialic acids from the cell surface. These cleavages prevent self-aggregation and ensure the efficient spread of the progeny virus from cell to cell. Otherwise, infection would be limited to one round of replication. Described as a receptor-destroying enzyme because it cleaves a terminal sialic acid from the cellular receptors. May facilitate viral invasion of the upper airways by cleaving the sialic acid moieties on the mucin of the airway epithelial cells. Likely to plays a role in the budding process through its association with lipid rafts during intracellular transport. May additionally display a raft-association independent effect on budding. Plays a role in the determination of host range restriction on replication and virulence. Sialidase activity in late endosome/lysosome traffic seems to enhance virus replication. The polypeptide is Neuraminidase (Influenza A virus (strain A/Equine/Santiago/1/1985 H3N8)).